A 707-amino-acid polypeptide reads, in one-letter code: Ribosomal RNA large subunit methyltransferase K/L (707 aa).

Residues 43 to 154 form the THUMP domain; it reads QIYRCCLWSR…KDKAILGVDM (112 aa).

It belongs to the methyltransferase superfamily. RlmKL family.

It localises to the cytoplasm. The enzyme catalyses guanosine(2445) in 23S rRNA + S-adenosyl-L-methionine = N(2)-methylguanosine(2445) in 23S rRNA + S-adenosyl-L-homocysteine + H(+). It catalyses the reaction guanosine(2069) in 23S rRNA + S-adenosyl-L-methionine = N(2)-methylguanosine(2069) in 23S rRNA + S-adenosyl-L-homocysteine + H(+). Functionally, specifically methylates the guanine in position 2445 (m2G2445) and the guanine in position 2069 (m7G2069) of 23S rRNA. This chain is Ribosomal RNA large subunit methyltransferase K/L, found in Vibrio parahaemolyticus serotype O3:K6 (strain RIMD 2210633).